A 151-amino-acid polypeptide reads, in one-letter code: 3-dehydroquinate dehydratase (151 aa).

Tyr-24 serves as the catalytic Proton acceptor. Substrate is bound by residues Asn-76, His-82, and Asp-89. His-102 acts as the Proton donor in catalysis. Substrate is bound by residues 103-104 and Arg-113; that span reads VS.

Belongs to the type-II 3-dehydroquinase family. In terms of assembly, homododecamer.

The enzyme catalyses 3-dehydroquinate = 3-dehydroshikimate + H2O. Its pathway is metabolic intermediate biosynthesis; chorismate biosynthesis; chorismate from D-erythrose 4-phosphate and phosphoenolpyruvate: step 3/7. Functionally, catalyzes a trans-dehydration via an enolate intermediate. The sequence is that of 3-dehydroquinate dehydratase from Rhodopseudomonas palustris (strain BisA53).